The sequence spans 312 residues: DNA-directed RNA polymerase subunit alpha (312 aa).

The tract at residues 1-226 (MIEFEKPIIT…EHLNLFTDLT (226 aa)) is alpha N-terminal domain (alpha-NTD). Residues 243-312 (DEKVLDRTIE…DLGLGLKNDK (70 aa)) are alpha C-terminal domain (alpha-CTD).

The protein belongs to the RNA polymerase alpha chain family. As to quaternary structure, homodimer. The RNAP catalytic core consists of 2 alpha, 1 beta, 1 beta' and 1 omega subunit. When a sigma factor is associated with the core the holoenzyme is formed, which can initiate transcription.

It catalyses the reaction RNA(n) + a ribonucleoside 5'-triphosphate = RNA(n+1) + diphosphate. In terms of biological role, DNA-dependent RNA polymerase catalyzes the transcription of DNA into RNA using the four ribonucleoside triphosphates as substrates. The polypeptide is DNA-directed RNA polymerase subunit alpha (Streptococcus pyogenes serotype M3 (strain ATCC BAA-595 / MGAS315)).